We begin with the raw amino-acid sequence, 328 residues long: Protein chibby homolog 2 (328 aa).

Residues 180–231 form a disordered region; it reads NKGASSVQKDTENTTAAGEGSLGPTCQEEHDAKEESTTPTQNDTKIAPSTED. The span at 182–195 shows a compositional bias: polar residues; sequence GASSVQKDTENTTA. Residues 206 to 215 are compositionally biased toward basic and acidic residues; that stretch reads QEEHDAKEES. The stretch at 259 to 307 forms a coiled coil; sequence RESLHALQDESKFFQEEYKKLKLQLNNVKNTVSDITTQMEMLEKELIAI.

It belongs to the chibby family. SPERT subfamily.

The polypeptide is Protein chibby homolog 2 (CBY2) (Gallus gallus (Chicken)).